A 541-amino-acid chain; its full sequence is 2-succinyl-5-enolpyruvyl-6-hydroxy-3-cyclohexene-1-carboxylate synthase (541 aa).

The protein belongs to the TPP enzyme family. MenD subfamily. As to quaternary structure, homodimer. Requires Mg(2+) as cofactor. Mn(2+) is required as a cofactor. The cofactor is thiamine diphosphate.

The catalysed reaction is isochorismate + 2-oxoglutarate + H(+) = 5-enolpyruvoyl-6-hydroxy-2-succinyl-cyclohex-3-ene-1-carboxylate + CO2. It functions in the pathway quinol/quinone metabolism; 1,4-dihydroxy-2-naphthoate biosynthesis; 1,4-dihydroxy-2-naphthoate from chorismate: step 2/7. The protein operates within quinol/quinone metabolism; menaquinone biosynthesis. Functionally, catalyzes the thiamine diphosphate-dependent decarboxylation of 2-oxoglutarate and the subsequent addition of the resulting succinic semialdehyde-thiamine pyrophosphate anion to isochorismate to yield 2-succinyl-5-enolpyruvyl-6-hydroxy-3-cyclohexene-1-carboxylate (SEPHCHC). The polypeptide is 2-succinyl-5-enolpyruvyl-6-hydroxy-3-cyclohexene-1-carboxylate synthase (Leuconostoc mesenteroides subsp. mesenteroides (strain ATCC 8293 / DSM 20343 / BCRC 11652 / CCM 1803 / JCM 6124 / NCDO 523 / NBRC 100496 / NCIMB 8023 / NCTC 12954 / NRRL B-1118 / 37Y)).